Here is a 482-residue protein sequence, read N- to C-terminus: UDP-N-acetylmuramate--L-alanine ligase (482 aa).

Position 123 to 129 (123 to 129) interacts with ATP; that stretch reads GTHGKTT.

This sequence belongs to the MurCDEF family.

It localises to the cytoplasm. It carries out the reaction UDP-N-acetyl-alpha-D-muramate + L-alanine + ATP = UDP-N-acetyl-alpha-D-muramoyl-L-alanine + ADP + phosphate + H(+). Its pathway is cell wall biogenesis; peptidoglycan biosynthesis. In terms of biological role, cell wall formation. The chain is UDP-N-acetylmuramate--L-alanine ligase from Pseudomonas putida (strain GB-1).